The sequence spans 283 residues: Lipoyl synthase (283 aa).

Residues cysteine 35, cysteine 40, cysteine 46, cysteine 61, cysteine 65, cysteine 68, and serine 273 each coordinate [4Fe-4S] cluster. Residues 47 to 262 form the Radical SAM core domain; it reads FRERQATFLI…RAAALATGFA (216 aa).

It belongs to the radical SAM superfamily. Lipoyl synthase family. Requires [4Fe-4S] cluster as cofactor.

It localises to the cytoplasm. It carries out the reaction [[Fe-S] cluster scaffold protein carrying a second [4Fe-4S](2+) cluster] + N(6)-octanoyl-L-lysyl-[protein] + 2 oxidized [2Fe-2S]-[ferredoxin] + 2 S-adenosyl-L-methionine + 4 H(+) = [[Fe-S] cluster scaffold protein] + N(6)-[(R)-dihydrolipoyl]-L-lysyl-[protein] + 4 Fe(3+) + 2 hydrogen sulfide + 2 5'-deoxyadenosine + 2 L-methionine + 2 reduced [2Fe-2S]-[ferredoxin]. It functions in the pathway protein modification; protein lipoylation via endogenous pathway; protein N(6)-(lipoyl)lysine from octanoyl-[acyl-carrier-protein]: step 2/2. Catalyzes the radical-mediated insertion of two sulfur atoms into the C-6 and C-8 positions of the octanoyl moiety bound to the lipoyl domains of lipoate-dependent enzymes, thereby converting the octanoylated domains into lipoylated derivatives. In Geobacter metallireducens (strain ATCC 53774 / DSM 7210 / GS-15), this protein is Lipoyl synthase.